Reading from the N-terminus, the 57-residue chain is UPF0391 membrane protein IL0696 (57 aa).

The next 2 helical transmembrane spans lie at 4–24 (WVLI…GGIA) and 28–48 (AGIA…SLVV).

The protein belongs to the UPF0391 family.

It is found in the cell membrane. The protein is UPF0391 membrane protein IL0696 of Idiomarina loihiensis (strain ATCC BAA-735 / DSM 15497 / L2-TR).